A 651-amino-acid polypeptide reads, in one-letter code: E3 SUMO-protein ligase PIAS1 (651 aa).

Residue Ala-2 is modified to N-acetylalanine. A required for interaction with MSX1 region spans residues 2–200 (ADSAELKQMV…KCDFTVQVQL (199 aa)). The 35-residue stretch at 11-45 (VMSLRVSELQVLLGYAGRNKHGRKHELLTKALHLL) folds into the SAP domain. An LXXLL motif motif is present at residues 19–23 (LQVLL). Residues Lys-40 and Lys-46 each participate in a glycyl lysine isopeptide (Lys-Gly) (interchain with G-Cter in SUMO2) cross-link. A Nuclear localization signal motif is present at residues 56–64 (KIKELYRRR). Residues 124–288 (HLTSALHPVH…SMAVYLVKQL (165 aa)) form the PINIT domain. Residues Lys-137 and Lys-238 each participate in a glycyl lysine isopeptide (Lys-Gly) (interchain with G-Cter in SUMO2) cross-link. An SP-RING-type zinc finger spans residues 320–405 (PDSEIATTSL…LKYCTDCDEI (86 aa)). Positions 351, 353, 374, and 377 each coordinate Zn(2+). Positions 368 to 380 (KKPTWVCPVCDKK) match the Nuclear localization signal motif. Lys-453 is covalently cross-linked (Glycyl lysine isopeptide (Lys-Gly) (interchain with G-Cter in SUMO2)). Residues 462–473 (LTIDSSSDEEEE) form an SUMO1-binding region. The tract at residues 465-511 (DSSSDEEEEEPPAKRTCPSLSPTSPLSNKGILSLPHQASPVSRTPSL) is disordered. A phosphoserine mark is found at Ser-467, Ser-468, Ser-483, and Ser-485. Low complexity predominate over residues 482–491 (PSLSPTSPLS). Thr-487 carries the phosphothreonine modification. Residues Ser-488 and Ser-491 each carry the phosphoserine modification. Residue Lys-493 forms a Glycyl lysine isopeptide (Lys-Gly) (interchain with G-Cter in SUMO2) linkage. 3 positions are modified to phosphoserine: Ser-503, Ser-510, and Ser-522. 2 repeat units span residues 520 to 523 (NTSL) and 557 to 560 (NTSL). Residues 520 to 615 (NTSLIQDYRH…GSSSGSNSSL (96 aa)) are 4 X 4 AA repeats of N-T-S-L. A 3; approximate repeat occupies 598–601 (STSL). Residues 600 to 630 (SLPATNGSSSGSNSSLVSSNSLRESHGHGVA) are disordered. Positions 605–621 (NGSSSGSNSSLVSSNSL) are enriched in low complexity. Residues 612–615 (NSSL) form a 4; approximate repeat.

This sequence belongs to the PIAS family. In terms of assembly, interacts with NR2C1; the interaction promotes its sumoylation. Interacts with DDX21, CSRP2, AXIN1, JUN, SATB2, PLAG1, TP53 and STAT1 (dimer), following IFNA1-stimulation. Interacts with SP3 (preferentially when SUMO-modified). Interacts with KLF8; the interaction results in SUMO ligation and repression of KLF8 transcriptional activity and of its cell cycle progression into G(1) phase. Interacts with CHUK/IKKA; this interaction induces PIAS1 phosphorylation. Interacts with PTK2/FAK1; the interaction promotes its sumoylation. Interacts with SUMO1, UBE2I, NCOA2 and AR. Interacts with NR2C1; the interaction promotes its sumoylation. Interacts with DDX5. Interacts with MTA1. Interacts with PML (isoform PML-12). Interacts with PRDM1. Interacts (via N-terminus) with MSX1 (via C-terminus); the interaction is required for the localization of both proteins to the nuclear periphery and specific binding of MSX1 to the core enhancer region in target gene promoters. In terms of processing, sumoylated. As to expression, expressed in kidney, heart, spleen, brain and cerebellum; weak expression, if any, in liver and lung.

The protein resides in the nucleus. It is found in the nucleus speckle. It localises to the PML body. The protein localises to the cytoplasm. Its subcellular location is the cytoskeleton. It catalyses the reaction S-ubiquitinyl-[E2 ubiquitin-conjugating enzyme]-L-cysteine + [acceptor protein]-L-lysine = [E2 ubiquitin-conjugating enzyme]-L-cysteine + N(6)-ubiquitinyl-[acceptor protein]-L-lysine.. Its pathway is protein modification; protein sumoylation. Functions as an E3-type small ubiquitin-like modifier (SUMO) ligase, stabilizing the interaction between UBE2I and the substrate, and as a SUMO-tethering factor. Catalyzes sumoylation of various proteins, such as CEBPB, MRE11, MTA1, PTK2 and PML. Plays a crucial role as a transcriptional coregulation in various cellular pathways, including the STAT pathway, the p53 pathway and the steroid hormone signaling pathway. In vitro, binds A/T-rich DNA. The effects of this transcriptional coregulation, transactivation or silencing, may vary depending upon the biological context. Mediates sumoylation of MRE11, stabilizing MRE11 on chromatin during end resection. Sumoylates PML (at 'Lys-65' and 'Lys-160') and PML-RAR and promotes their ubiquitin-mediated degradation. PIAS1-mediated sumoylation of PML promotes its interaction with CSNK2A1/CK2 which in turn promotes PML phosphorylation and degradation. Enhances the sumoylation of MTA1 and may participate in its paralog-selective sumoylation. Plays a dynamic role in adipogenesis by promoting the SUMOylation and degradation of CEBPB. Mediates the nuclear mobility and localization of MSX1 to the nuclear periphery, whereby MSX1 is brought into the proximity of target myoblast differentiation factor genes. Also required for the binding of MSX1 to the core enhancer region in target gene promoter regions, independent of its sumoylation activity. Capable of binding to the core enhancer region TAAT box in the MYOD1 gene promoter. This Mus musculus (Mouse) protein is E3 SUMO-protein ligase PIAS1 (Pias1).